Consider the following 142-residue polypeptide: MKTFTAKPETVSRDWYVVDAEGKTLGRIATEIASRLRGKHKPEYTPHVDTGDYIIVINAEKVTVTGNKAAGKMYYSHSGFPGGIKEINFEKLQAHKPEMIIEKAVKGMLPKGPLGRAMFRKLKVYAGAEHNHAAQQPQVLDI.

This sequence belongs to the universal ribosomal protein uL13 family. Part of the 50S ribosomal subunit.

Functionally, this protein is one of the early assembly proteins of the 50S ribosomal subunit, although it is not seen to bind rRNA by itself. It is important during the early stages of 50S assembly. This chain is Large ribosomal subunit protein uL13, found in Shewanella amazonensis (strain ATCC BAA-1098 / SB2B).